A 347-amino-acid chain; its full sequence is NADH-quinone oxidoreductase subunit H 1 (347 aa).

Helical transmembrane passes span 13–33 (IIMIGQSLLLLVCLLVFIAYV), 50–70 (PNVVGPFGLFQSFADLLKFVF), 82–102 (AVFLLAPLVTVLLALSTWAVV), 115–135 (VGILYIFAISSLEVYGIIMGG), 161–181 (IGFVIVTVLLCVGSLNLTDIV), 198–218 (FLDWHWLSLFPMFIVFFISAL), 263–283 (CALTTILFLGGWLPPVDIWIL), 286–306 (VPGIIWFTLKACLVFFMFAMV), and 321–341 (LGWKVFLPLSLAMVIIVAFVL).

This sequence belongs to the complex I subunit 1 family. In terms of assembly, NDH-1 is composed of 14 different subunits. Subunits NuoA, H, J, K, L, M, N constitute the membrane sector of the complex.

The protein localises to the cell inner membrane. It carries out the reaction a quinone + NADH + 5 H(+)(in) = a quinol + NAD(+) + 4 H(+)(out). In terms of biological role, NDH-1 shuttles electrons from NADH, via FMN and iron-sulfur (Fe-S) centers, to quinones in the respiratory chain. The immediate electron acceptor for the enzyme in this species is believed to be ubiquinone. Couples the redox reaction to proton translocation (for every two electrons transferred, four hydrogen ions are translocated across the cytoplasmic membrane), and thus conserves the redox energy in a proton gradient. This subunit may bind ubiquinone. In Rhizobium etli (strain ATCC 51251 / DSM 11541 / JCM 21823 / NBRC 15573 / CFN 42), this protein is NADH-quinone oxidoreductase subunit H 1.